A 37-amino-acid chain; its full sequence is Calcitonin gene-related peptide 1 (37 aa).

Cys2 and Cys7 are joined by a disulfide. Phe37 bears the Phenylalanine amide mark.

Belongs to the calcitonin family.

The protein localises to the secreted. CGRP1/CALCA is a peptide hormone that induces vasodilation mediated by the CALCRL-RAMP1 receptor complex. Dilates a variety of vessels including the coronary, cerebral and systemic vasculature. Its abundance in the CNS also points toward a neurotransmitter or neuromodulator role. It also elevates platelet cAMP. CGRP1 can also bind and activate CALCR-RAMP1 (AMYR1) receptor complex. The polypeptide is Calcitonin gene-related peptide 1 (CALCA) (Ovis aries (Sheep)).